Here is a 566-residue protein sequence, read N- to C-terminus: Folate-like transporter DDB_G0272544 (566 aa).

The stretch at 24–81 (RNQDEDENENENNDNLENDNNKRNYISINNYEPYKEIDNNNNKNNNNNNIINNNNKIN) forms a coiled coil. The tract at residues 25-46 (NQDEDENENENNDNLENDNNKR) is disordered. Over residues 27–40 (DEDENENENNDNLE) the composition is skewed to acidic residues. 11 helical membrane passes run 148–168 (VFLL…IIII), 171–191 (VAKI…WMIL), 194–214 (ITEG…YFSL), 226–246 (VNAG…LLVE), 252–272 (VYLL…ALGF), 304–324 (IWSG…QNLF), 332–352 (SWNG…AIIP), 364–384 (GIIL…MGFG), 388–408 (VVSA…SPIV), 420–440 (IGVL…LVQS), and 458–478 (YGAC…FLFL). Residues 517–544 (YNANIIDFENNNNNNNNNNNNNNNNNNN) are a coiled coil. The segment covering 526 to 556 (NNNNNNNNNNNNNNNNNNNNNNNNNNNNNNN) has biased composition (low complexity). The tract at residues 526-566 (NNNNNNNNNNNNNNNNNNNNNNNNNNNNNNNVGIGGNDNFK) is disordered.

The protein belongs to the reduced folate carrier (RFC) transporter (TC 2.A.48) family.

The protein localises to the membrane. Its function is as follows. Folate transporter. In Dictyostelium discoideum (Social amoeba), this protein is Folate-like transporter DDB_G0272544.